The following is a 174-amino-acid chain: UPF0340 protein SAHV_2098 (174 aa).

This sequence belongs to the UPF0340 family.

This is UPF0340 protein SAHV_2098 from Staphylococcus aureus (strain Mu3 / ATCC 700698).